We begin with the raw amino-acid sequence, 107 residues long: ATP-dependent Clp protease adapter protein ClpS (107 aa).

The protein belongs to the ClpS family. In terms of assembly, binds to the N-terminal domain of the chaperone ClpA.

Involved in the modulation of the specificity of the ClpAP-mediated ATP-dependent protein degradation. The sequence is that of ATP-dependent Clp protease adapter protein ClpS from Syntrophus aciditrophicus (strain SB).